The primary structure comprises 950 residues: 2-oxoglutarate dehydrogenase E1 component (950 aa).

This sequence belongs to the alpha-ketoglutarate dehydrogenase family. Homodimer. Part of the 2-oxoglutarate dehydrogenase (OGDH) complex composed of E1 (2-oxoglutarate dehydrogenase), E2 (dihydrolipoamide succinyltransferase) and E3 (dihydrolipoamide dehydrogenase); the complex contains multiple copies of the three enzymatic components (E1, E2 and E3). Thiamine diphosphate serves as cofactor.

The enzyme catalyses N(6)-[(R)-lipoyl]-L-lysyl-[protein] + 2-oxoglutarate + H(+) = N(6)-[(R)-S(8)-succinyldihydrolipoyl]-L-lysyl-[protein] + CO2. In terms of biological role, E1 component of the 2-oxoglutarate dehydrogenase (OGDH) complex which catalyzes the decarboxylation of 2-oxoglutarate, the first step in the conversion of 2-oxoglutarate to succinyl-CoA and CO(2). The sequence is that of 2-oxoglutarate dehydrogenase E1 component (odhA) from Cupriavidus necator (strain ATCC 17699 / DSM 428 / KCTC 22496 / NCIMB 10442 / H16 / Stanier 337) (Ralstonia eutropha).